The chain runs to 350 residues: Twinfilin-1 (350 aa).

An N-acetylserine modification is found at S2. The ADF-H 1 domain maps to 2 to 139 (SHQTGIQASE…SLHGYRKYLL (138 aa)). S143 and S277 each carry phosphoserine. One can recognise an ADF-H 2 domain in the interval 175–313 (LQGVAFPISR…TADFLYDEVH (139 aa)). The residue at position 309 (Y309) is a Phosphotyrosine. Positions 316–350 (QHAHKQSFAKPKGPAGKRGIRRLIRGPAEAEATTD) are disordered. Phosphothreonine is present on T349.

This sequence belongs to the actin-binding proteins ADF family. Twinfilin subfamily. Interacts with G-actin; ADP-actin form and capping protein (CP). May also be able to interact with TWF2 and phosphoinositides, PI(4,5)P2. When bound to PI(4,5)P2, it is down-regulated. Interacts with ACTG1. Post-translationally, phosphorylated on serine and threonine residues.

The protein resides in the cytoplasm. It is found in the cytoskeleton. In terms of biological role, actin-binding protein involved in motile and morphological processes. Inhibits actin polymerization, likely by sequestering G-actin. By capping the barbed ends of filaments, it also regulates motility. Seems to play an important role in clathrin-mediated endocytosis and distribution of endocytic organelles. This is Twinfilin-1 (Twf1) from Rattus norvegicus (Rat).